The chain runs to 396 residues: MIRRLAAFSALSGLATAWLPEVNKKITSTNGTNLFTSSNGKIRGVNLGSQFVFEPWIAEKAWSDMGCGGQKSEFDCVSRLGQANANSAFASHWGSWITQDDIAEMVSYGLNTIRVPVGYWMREDLVYSDSEHFPQGGLQYLENLCEWASDAGLYIIIDLHGAPGAQTPQNPFTGQYAPIAGFYQDYQFEGALKFLEWMTTNIHQNDKFRNVGMLEVVNEPVQDAGKVGSMRSSYYPNAFKRIRAAEQSLNIDRNNYLHIQMMDRLWGSGDPNESLTDTYYAAYDDHRYLKWASVAVSKDSYISTSCSDQLNSNTPTIVGEWSLSVPDNVQWNSDWSPDSNKDFYKKWFAAQVTAYERQQGWIFWTWKAQLGDYRWSYQGGLLLTRPGIGDQQVLTL.

A signal peptide spans 1 to 17 (MIRRLAAFSALSGLATA). Residue asparagine 30 is glycosylated (N-linked (GlcNAc...) asparagine). The active-site Proton donor is the glutamate 219. An N-linked (GlcNAc...) asparagine glycan is attached at asparagine 272. The Nucleophile role is filled by glutamate 320.

The protein belongs to the glycosyl hydrolase 5 (cellulase A) family.

It localises to the secreted. The catalysed reaction is Random hydrolysis of (1-&gt;6)-linkages in (1-&gt;6)-beta-D-glucans.. Functionally, beta-glucanases participate in the metabolism of beta-glucan, the main structural component of the cell wall. Acts on lutean, pustulan and 1,6-oligo-beta-D-glucosides. This Aspergillus fumigatus (strain ATCC MYA-4609 / CBS 101355 / FGSC A1100 / Af293) (Neosartorya fumigata) protein is Probable glucan endo-1,6-beta-glucosidase B (exgB).